The chain runs to 61 residues: Large ribosomal subunit protein uL30 (61 aa).

It belongs to the universal ribosomal protein uL30 family. In terms of assembly, part of the 50S ribosomal subunit.

The chain is Large ribosomal subunit protein uL30 from Corynebacterium aurimucosum (strain ATCC 700975 / DSM 44827 / CIP 107346 / CN-1) (Corynebacterium nigricans).